Reading from the N-terminus, the 616-residue chain is Homeodomain-interacting protein kinase 4 (616 aa).

A Protein kinase domain is found at 11 to 347 (YDIIEVLGKG…PSAALRHPFV (337 aa)). Residues 17 to 25 (LGKGTFGEV) and Lys-40 contribute to the ATP site. The active-site Proton acceptor is the Asp-136. A disordered region spans residues 487–616 (HKARKAPAGS…SFLQHVGGHH (130 aa)). The segment covering 497-512 (KSDSNFSNLIRLSQAS) has biased composition (polar residues). A Phosphoserine modification is found at Ser-512. The span at 542-560 (REGDGPSIKDRPMDAERSG) shows a compositional bias: basic and acidic residues.

It belongs to the protein kinase superfamily. CMGC Ser/Thr protein kinase family. HIPK subfamily. In terms of processing, autophosphorylated.

It is found in the cytoplasm. It catalyses the reaction L-seryl-[protein] + ATP = O-phospho-L-seryl-[protein] + ADP + H(+). It carries out the reaction L-threonyl-[protein] + ATP = O-phospho-L-threonyl-[protein] + ADP + H(+). Protein kinase that phosphorylates TP53, and thus induces TP53 repression of BIRC5 promoter. May act as a corepressor of transcription factors (Potential). This Rattus norvegicus (Rat) protein is Homeodomain-interacting protein kinase 4 (Hipk4).